We begin with the raw amino-acid sequence, 366 residues long: Cytochrome c peroxidase, mitochondrial (366 aa).

Residues 1 to 46 (MASAARSASRAFLRSTPTTSSFRPAVRAARFALPAQGFRAAGRRGY) constitute a mitochondrion transit peptide. The active-site Proton acceptor is the H127. H250 contacts heme b. The Tryptophan radical intermediate role is filled by W266.

It belongs to the peroxidase family. Cytochrome c peroxidase subfamily. In terms of assembly, forms a one-to-one complex with cytochrome c. Requires heme b as cofactor.

The protein localises to the mitochondrion matrix. It is found in the mitochondrion intermembrane space. The catalysed reaction is 2 Fe(II)-[cytochrome c] + H2O2 + 2 H(+) = 2 Fe(III)-[cytochrome c] + 2 H2O. Destroys radicals which are normally produced within the cells and which are toxic to biological systems. The chain is Cytochrome c peroxidase, mitochondrial (ccp1) from Aspergillus fumigatus (strain ATCC MYA-4609 / CBS 101355 / FGSC A1100 / Af293) (Neosartorya fumigata).